Consider the following 141-residue polypeptide: uncharacterized protein (141 aa).

The next 3 membrane-spanning stretches (helical) occupy residues 32–52, 69–89, and 109–129; these read LIVL…TSII, IIAL…IAGF, and FTGY…PIAY.

The protein localises to the cell membrane. This is an uncharacterized protein from Methanocaldococcus jannaschii (strain ATCC 43067 / DSM 2661 / JAL-1 / JCM 10045 / NBRC 100440) (Methanococcus jannaschii).